Here is a 584-residue protein sequence, read N- to C-terminus: Peroxynitrite isomerase THAP4 (584 aa).

A THAP-type zinc finger spans residues 1–85 (MVICCAAANC…LKPTAVPSIF (85 aa)). Residues 84-330 (IFHLAEKKRR…EAVQSEHSDA (247 aa)) form a disordered region. Positions 89 to 104 (EKKRRAGGHGRPRRRD) are enriched in basic residues. Low complexity predominate over residues 122-138 (GKAAAGSPSSSSASPMA). A compositionally biased stretch (basic and acidic residues) spans 158 to 178 (AARETAGQERGRQPLEGRAED). The segment covering 190-208 (GEAGTGAEDAGEEGATPAD) has biased composition (low complexity). Positions 236-239 (LHSY) match the HCFC1-binding motif (HBM) motif. S240 bears the Phosphoserine mark. Residues 248 to 267 (ERPAVPREPVERKRLRRDAE) are compositionally biased toward basic and acidic residues. Residues 422–584 (PPKMSPVVEP…LHVTYKKVTP (163 aa)) are nitrobindin. Heme b is bound by residues T451 and H574.

The protein in the C-terminal section; belongs to the nitrobindin family. Homodimer. Requires heme b as cofactor.

It is found in the cytoplasm. It localises to the nucleus. It carries out the reaction peroxynitrite = nitrate. It participates in nitrogen metabolism. Heme-binding protein able to scavenge peroxynitrite and to protect free L-tyrosine against peroxynitrite-mediated nitration, by acting as a peroxynitrite isomerase that converts peroxynitrite to nitrate. Therefore, this protein likely plays a role in peroxynitrite sensing and in the detoxification of reactive nitrogen and oxygen species (RNS and ROS, respectively). Is able to bind nitric oxide (NO) in vitro, but may act as a sensor of peroxynitrite levels in vivo, possibly modulating the transcriptional activity residing in the N-terminal region. This is Peroxynitrite isomerase THAP4 from Bos taurus (Bovine).